The sequence spans 91 residues: Small ribosomal subunit protein uS19 (91 aa).

This sequence belongs to the universal ribosomal protein uS19 family.

Its function is as follows. Protein S19 forms a complex with S13 that binds strongly to the 16S ribosomal RNA. The polypeptide is Small ribosomal subunit protein uS19 (Fusobacterium nucleatum subsp. nucleatum (strain ATCC 25586 / DSM 15643 / BCRC 10681 / CIP 101130 / JCM 8532 / KCTC 2640 / LMG 13131 / VPI 4355)).